The chain runs to 317 residues: Putative carboxypeptidase RP402 (317 aa).

The Nucleophile role is filled by S125. Active-site charge relay system residues include E225 and H288.

The protein belongs to the peptidase S66 family.

The chain is Putative carboxypeptidase RP402 from Rickettsia prowazekii (strain Madrid E).